The following is an 802-amino-acid chain: ATP-dependent zinc metalloprotease FTSH 7, chloroplastic (802 aa).

Residues 1–55 constitute a chloroplast transit peptide; that stretch reads MTTTFEFLQPRIHGFATCCSSNSLLYSKASRFFNDRCRVYRQNPNRFVSNSITLP. A disordered region spans residues 87–117; the sequence is CQEDDQNESSSEEEESSQSTPAKSERKREKK. The span at 88 to 102 shows a compositional bias: acidic residues; it reads QEDDQNESSSEEEES. The next 2 helical transmembrane spans lie at 134–154 and 268–288; these read IIQA…MFVM and GGFF…AGLI. 365 to 372 provides a ligand contact to ATP; it reads GLPGTGKT. His590 lines the Zn(2+) pocket. Glu591 is an active-site residue. The Zn(2+) site is built by His594 and Asp673.

The protein in the N-terminal section; belongs to the AAA ATPase family. In the C-terminal section; belongs to the peptidase M41 family. Zn(2+) serves as cofactor.

It localises to the plastid. Its subcellular location is the chloroplast thylakoid membrane. Functionally, probable ATP-dependent zinc metallopeptidase. The polypeptide is ATP-dependent zinc metalloprotease FTSH 7, chloroplastic (FTSH7) (Arabidopsis thaliana (Mouse-ear cress)).